Reading from the N-terminus, the 326-residue chain is MAFISFPPRHPSSSARLPLTLIALDDWALSTITGVDSEKYIQGQVTADVSQMTEQQHLLAAHCDAKGKMWSTLRLFRERDGFAWIERRSVREAQLTELKKYAVFSKVVIAPDDERVLLGVAGFQARAALANVFSELPNSENQVVRDGASTLLWFEHPAERFLLVTDVATANMLTEKLHGEAELNNSQQWLALDIEAGIPVIDAANSGQFIPQATNLQALGGISFKKGCYTGQEMVARAKFRGANKRALWLLAGKASRVPEAGEDLELQMGENWRRTGAILAATQLDDGQLLVQAVMNNDLEAESVFRVRDDANTLHIVPLPYSLEE.

Positions 27 and 189 each coordinate folate.

Belongs to the tRNA-modifying YgfZ family.

It is found in the cytoplasm. Functionally, folate-binding protein involved in regulating the level of ATP-DnaA and in the modification of some tRNAs. It is probably a key factor in regulatory networks that act via tRNA modification, such as initiation of chromosomal replication. The chain is tRNA-modifying protein YgfZ from Salmonella paratyphi A (strain AKU_12601).